The following is a 100-amino-acid chain: DNA base-flipping protein (100 aa).

This sequence belongs to the MGMT family. ATL subfamily.

Its function is as follows. Involved in DNA damage recognition. Binds DNA containing O(6)-methylguanine. Binds to the damaged base and flips the base out of the DNA duplex into an extrahelical conformation, which allows processing by repair proteins. The protein is DNA base-flipping protein of Vibrio parahaemolyticus serotype O3:K6 (strain AQ3810).